Here is a 255-residue protein sequence, read N- to C-terminus: 5'-nucleotidase SurE (255 aa).

A divalent metal cation contacts are provided by D16, D17, S47, and N100.

It belongs to the SurE nucleotidase family. The cofactor is a divalent metal cation.

Its subcellular location is the cytoplasm. It carries out the reaction a ribonucleoside 5'-phosphate + H2O = a ribonucleoside + phosphate. Its function is as follows. Nucleotidase that shows phosphatase activity on nucleoside 5'-monophosphates. This Vibrio vulnificus (strain YJ016) protein is 5'-nucleotidase SurE.